The primary structure comprises 78 residues: RNA-binding protein Hfq (78 aa).

A Sm domain is found at 10–69 (DPFLNALRKEHVPVSIYLVNGIKLQGNIESFDQYVVLLRNTVTQMVYKHAISTVVPARPV).

It belongs to the Hfq family. As to quaternary structure, homohexamer.

RNA chaperone that binds small regulatory RNA (sRNAs) and mRNAs to facilitate mRNA translational regulation in response to envelope stress, environmental stress and changes in metabolite concentrations. Also binds with high specificity to tRNAs. This chain is RNA-binding protein Hfq, found in Paraburkholderia phytofirmans (strain DSM 17436 / LMG 22146 / PsJN) (Burkholderia phytofirmans).